Here is a 351-residue protein sequence, read N- to C-terminus: DNA polymerase IV (351 aa).

Positions 4–185 (IIHVDMDCFF…LPLAKIPGVG (182 aa)) constitute a UmuC domain. D8 and D103 together coordinate Mg(2+). E104 is a catalytic residue.

It belongs to the DNA polymerase type-Y family. As to quaternary structure, monomer. Mg(2+) is required as a cofactor.

The protein resides in the cytoplasm. The enzyme catalyses DNA(n) + a 2'-deoxyribonucleoside 5'-triphosphate = DNA(n+1) + diphosphate. Poorly processive, error-prone DNA polymerase involved in untargeted mutagenesis. Copies undamaged DNA at stalled replication forks, which arise in vivo from mismatched or misaligned primer ends. These misaligned primers can be extended by PolIV. Exhibits no 3'-5' exonuclease (proofreading) activity. May be involved in translesional synthesis, in conjunction with the beta clamp from PolIII. The polypeptide is DNA polymerase IV (Salmonella arizonae (strain ATCC BAA-731 / CDC346-86 / RSK2980)).